Consider the following 257-residue polypeptide: Indole-3-glycerol phosphate synthase (257 aa).

It belongs to the TrpC family.

It catalyses the reaction 1-(2-carboxyphenylamino)-1-deoxy-D-ribulose 5-phosphate + H(+) = (1S,2R)-1-C-(indol-3-yl)glycerol 3-phosphate + CO2 + H2O. Its pathway is amino-acid biosynthesis; L-tryptophan biosynthesis; L-tryptophan from chorismate: step 4/5. The polypeptide is Indole-3-glycerol phosphate synthase (Halalkalibacterium halodurans (strain ATCC BAA-125 / DSM 18197 / FERM 7344 / JCM 9153 / C-125) (Bacillus halodurans)).